The sequence spans 359 residues: Sulfate/thiosulfate import ATP-binding protein CysA (359 aa).

The 235-residue stretch at 3–237 (VRVAGVRKEF…PNSPFVYGFI (235 aa)) folds into the ABC transporter domain. An ATP-binding site is contributed by 35 to 42 (GPSGSGKT).

This sequence belongs to the ABC transporter superfamily. Sulfate/tungstate importer (TC 3.A.1.6) family. In terms of assembly, the complex is composed of two ATP-binding proteins (CysA), two transmembrane proteins (CysT and CysW) and a solute-binding protein (CysP).

The protein resides in the cell inner membrane. The catalysed reaction is sulfate(out) + ATP + H2O = sulfate(in) + ADP + phosphate + H(+). The enzyme catalyses thiosulfate(out) + ATP + H2O = thiosulfate(in) + ADP + phosphate + H(+). Functionally, part of the ABC transporter complex CysAWTP involved in sulfate/thiosulfate import. Responsible for energy coupling to the transport system. In Brucella melitensis biotype 1 (strain ATCC 23456 / CCUG 17765 / NCTC 10094 / 16M), this protein is Sulfate/thiosulfate import ATP-binding protein CysA.